We begin with the raw amino-acid sequence, 139 residues long: Holo-[acyl-carrier-protein] synthase (139 aa).

Mg(2+) contacts are provided by D9 and E63.

Belongs to the P-Pant transferase superfamily. AcpS family. It depends on Mg(2+) as a cofactor.

It is found in the cytoplasm. The catalysed reaction is apo-[ACP] + CoA = holo-[ACP] + adenosine 3',5'-bisphosphate + H(+). Functionally, transfers the 4'-phosphopantetheine moiety from coenzyme A to a Ser of acyl-carrier-protein. This is Holo-[acyl-carrier-protein] synthase from Wigglesworthia glossinidia brevipalpis.